A 120-amino-acid polypeptide reads, in one-letter code: Peptidyl-tRNA hydrolase (120 aa).

Belongs to the PTH2 family.

The protein localises to the cytoplasm. It catalyses the reaction an N-acyl-L-alpha-aminoacyl-tRNA + H2O = an N-acyl-L-amino acid + a tRNA + H(+). Functionally, the natural substrate for this enzyme may be peptidyl-tRNAs which drop off the ribosome during protein synthesis. This is Peptidyl-tRNA hydrolase from Saccharolobus islandicus (strain Y.N.15.51 / Yellowstone #2) (Sulfolobus islandicus).